Reading from the N-terminus, the 383-residue chain is Cobalt-precorrin-5B C(1)-methyltransferase (383 aa).

The protein belongs to the CbiD family.

The enzyme catalyses Co-precorrin-5B + S-adenosyl-L-methionine = Co-precorrin-6A + S-adenosyl-L-homocysteine. It functions in the pathway cofactor biosynthesis; adenosylcobalamin biosynthesis; cob(II)yrinate a,c-diamide from sirohydrochlorin (anaerobic route): step 6/10. Functionally, catalyzes the methylation of C-1 in cobalt-precorrin-5B to form cobalt-precorrin-6A. This chain is Cobalt-precorrin-5B C(1)-methyltransferase, found in Prochlorococcus marinus (strain MIT 9313).